We begin with the raw amino-acid sequence, 941 residues long: Cell wall protein IFF3 (941 aa).

The N-terminal stretch at 1–20 (MQLFQNILVSIALLTQVVFA) is a signal peptide. N-linked (GlcNAc...) asparagine glycans are attached at residues Asn-36, Asn-367, Asn-686, Asn-732, Asn-790, Asn-818, Asn-825, Asn-884, and Asn-917. A lipid anchor (GPI-anchor amidated asparagine) is attached at Asn-917. Positions 918–941 (GSNKESIENIKYLTLVVFGLMMFM) are cleaved as a propeptide — removed in mature form.

This sequence belongs to the HYR1/IFF family. The GPI-anchor is attached to the protein in the endoplasmic reticulum and serves to target the protein to the cell surface. There, the glucosamine-inositol phospholipid moiety is cleaved off and the GPI-modified mannoprotein is covalently attached via its lipidless GPI glycan remnant to the 1,6-beta-glucan of the outer cell wall layer.

It is found in the secreted. It localises to the cell wall. The protein localises to the membrane. Its function is as follows. GPI-anchored cell wall protein involved in cell wall organization, hyphal growth, as well as in host-fungal interaction and virulence. This Candida albicans (strain SC5314 / ATCC MYA-2876) (Yeast) protein is Cell wall protein IFF3 (IFF3).